Consider the following 150-residue polypeptide: Ribonuclease K6 (150 aa).

The first 23 residues, 1–23 (MVLCFPLLLLLLVLWGPVCLLHA), serve as a signal peptide directing secretion. His38 (proton acceptor) is an active-site residue. 4 cysteine pairs are disulfide-bonded: Cys46–Cys104, Cys60–Cys114, Cys78–Cys129, and Cys85–Cys92. A glycan (N-linked (GlcNAc...) asparagine) is linked at Asn55. Substrate is bound by residues 61-65 (KHQNT) and Lys86. A glycan (N-linked (GlcNAc...) asparagine) is linked at Asn100. Arg105 serves as a coordination point for substrate. His145 functions as the Proton donor in the catalytic mechanism.

It belongs to the pancreatic ribonuclease family. Interacts (via N-terminus) with bacterial lipopolysaccharide (LPS).

The protein resides in the secreted. It localises to the lysosome. The protein localises to the cytoplasmic granule. Functionally, ribonuclease which shows a preference for the pyrimidines uridine and cytosine. Has potent antibacterial activity against a range of Gram-positive and Gram-negative bacteria, including P.aeruginosa, A.baumanii, M.luteus, S.aureus, E.faecalis, E.faecium, S.saprophyticus and E.coli. Causes loss of bacterial membrane integrity, and also promotes agglutination of Gram-negative bacteria. Probably contributes to urinary tract sterility. Bactericidal activity is independent of RNase activity. This Miopithecus talapoin (Angolan talapoin) protein is Ribonuclease K6 (RNASE6).